We begin with the raw amino-acid sequence, 280 residues long: Shikimate dehydrogenase (NADP(+)) (280 aa).

Residues 20 to 22 (SLS) and threonine 67 each bind shikimate. Lysine 71 functions as the Proton acceptor in the catalytic mechanism. Glutamate 83 contacts NADP(+). Shikimate-binding residues include asparagine 92 and aspartate 107. Residues 131 to 135 (GAGGA), 155 to 160 (NRTLNK), and leucine 224 each bind NADP(+). Tyrosine 226 is a binding site for shikimate. Residue glycine 247 participates in NADP(+) binding.

The protein belongs to the shikimate dehydrogenase family. In terms of assembly, homodimer.

The enzyme catalyses shikimate + NADP(+) = 3-dehydroshikimate + NADPH + H(+). The protein operates within metabolic intermediate biosynthesis; chorismate biosynthesis; chorismate from D-erythrose 4-phosphate and phosphoenolpyruvate: step 4/7. Its function is as follows. Involved in the biosynthesis of the chorismate, which leads to the biosynthesis of aromatic amino acids. Catalyzes the reversible NADPH linked reduction of 3-dehydroshikimate (DHSA) to yield shikimate (SA). This is Shikimate dehydrogenase (NADP(+)) from Caldanaerobacter subterraneus subsp. tengcongensis (strain DSM 15242 / JCM 11007 / NBRC 100824 / MB4) (Thermoanaerobacter tengcongensis).